The primary structure comprises 628 residues: 1-deoxy-D-xylulose-5-phosphate synthase (628 aa).

Thiamine diphosphate-binding positions include H72 and 113–115 (GHA). D144 is a binding site for Mg(2+). Thiamine diphosphate-binding positions include 145-146 (GA), N174, Y287, and E370. N174 contacts Mg(2+).

The protein belongs to the transketolase family. DXPS subfamily. Homodimer. Mg(2+) serves as cofactor. Requires thiamine diphosphate as cofactor.

The catalysed reaction is D-glyceraldehyde 3-phosphate + pyruvate + H(+) = 1-deoxy-D-xylulose 5-phosphate + CO2. The protein operates within metabolic intermediate biosynthesis; 1-deoxy-D-xylulose 5-phosphate biosynthesis; 1-deoxy-D-xylulose 5-phosphate from D-glyceraldehyde 3-phosphate and pyruvate: step 1/1. In terms of biological role, catalyzes the acyloin condensation reaction between C atoms 2 and 3 of pyruvate and glyceraldehyde 3-phosphate to yield 1-deoxy-D-xylulose-5-phosphate (DXP). The chain is 1-deoxy-D-xylulose-5-phosphate synthase from Prochlorococcus marinus (strain NATL2A).